The chain runs to 275 residues: Large ribosomal subunit protein uL2 (275 aa).

The tract at residues 222 to 275 is disordered; it reads GVAMNPVDHPMGGGEGRSSGGRHPCSPWGMPTKGYKTRKNKTTDKFIVRKRNKR.

It belongs to the universal ribosomal protein uL2 family. In terms of assembly, part of the 50S ribosomal subunit. Forms a bridge to the 30S subunit in the 70S ribosome.

Its function is as follows. One of the primary rRNA binding proteins. Required for association of the 30S and 50S subunits to form the 70S ribosome, for tRNA binding and peptide bond formation. It has been suggested to have peptidyltransferase activity; this is somewhat controversial. Makes several contacts with the 16S rRNA in the 70S ribosome. This is Large ribosomal subunit protein uL2 from Desulfatibacillum aliphaticivorans.